Here is a 268-residue protein sequence, read N- to C-terminus: Interleukin-2 receptor subunit alpha (268 aa).

Positions 1 to 21 (MEPRLLMLGFLSLTIVPSCRA) are cleaved as a signal peptide. One can recognise a Sushi 1 domain in the interval 22–79 (ELCLYDPPEVPNATFKALSYKNGTILNCECKRGFRRLKELVYMRCLGNSWSSNCQCTS). Over 22–236 (ELCLYDPPEV…ETFVLTMEYK (215 aa)) the chain is Extracellular. 3 cysteine pairs are disulfide-bonded: Cys24–Cys66, Cys49–Cys75, and Cys51–Cys77. Residues Asn33 and Asn43 are each glycosylated (N-linked (GlcNAc...) asparagine). The interval 86–109 (RKQVTAQLEHQKEQQTTTDMQKPT) is disordered. The segment covering 88–109 (QVTAQLEHQKEQQTTTDMQKPT) has biased composition (polar residues). N-linked (GlcNAc...) asparagine glycosylation occurs at Asn116. Residues 119 to 182 (GHCREPPPWK…WTQPQLTCVD (64 aa)) form the Sushi 2 domain. 2 disulfides stabilise this stretch: Cys121-Cys164 and Cys148-Cys180. The disordered stretch occupies residues 189-219 (FLASEESQGSRNSSPESETSCPITTTDFPQP). Polar residues predominate over residues 193–211 (EESQGSRNSSPESETSCPI). The chain crosses the membrane as a helical span at residues 237–257 (VAVASCLFLLISILLLSGLTW). At 258 to 268 (QHRWRKSRRTI) the chain is on the cytoplasmic side.

As to quaternary structure, non-covalent dimer of an alpha and a beta subunit. IL2R exists in 3 different forms: a high affinity dimer, an intermediate affinity monomer (beta subunit), and a low affinity monomer (alpha subunit). The high and intermediate affinity forms also associate with a gamma subunit.

The protein localises to the membrane. In terms of biological role, receptor for interleukin-2. The receptor is involved in the regulation of immune tolerance by controlling regulatory T cells (TREGs) activity. TREGs suppress the activation and expansion of autoreactive T-cells. The polypeptide is Interleukin-2 receptor subunit alpha (Il2ra) (Mus musculus (Mouse)).